Reading from the N-terminus, the 369-residue chain is MKSGRFIGVMSGTSLDGVDVVLATIDEHRVAQLASLSWPIPVSLKQAVLDICQGQQLTLSQFGQLDTQLGRLFADAVNALLKEQNLQARDIVAIGCHGQTVWHEPTGVAPHTLQIGDNNQIAARTGITVVGDFRRRDIALGGQGAPLVPAFHHALLAHPTERRMVLNIGGIANLSLLIPGQPVGGYDTGPGNMLMDAWIWRQAGKPYDKDAEWARAGKVILPLLQNMLSDPYFSQPAPKSTGREYFNYGWLERHLRHFPGVDPRDVQATLAELTAVTISEQVLLSGGCERLMVCGGGSRNPLLMARLAALLPGTEVTTTDAVGISGDDMEALAFAWLAWRTLAGLPGNLPSVTGASQETVLGAIFPANP.

12-19 serves as a coordination point for ATP; it reads GTSLDGVD.

It belongs to the anhydro-N-acetylmuramic acid kinase family.

The catalysed reaction is 1,6-anhydro-N-acetyl-beta-muramate + ATP + H2O = N-acetyl-D-muramate 6-phosphate + ADP + H(+). It participates in amino-sugar metabolism; 1,6-anhydro-N-acetylmuramate degradation. The protein operates within cell wall biogenesis; peptidoglycan recycling. Its function is as follows. Catalyzes the specific phosphorylation of 1,6-anhydro-N-acetylmuramic acid (anhMurNAc) with the simultaneous cleavage of the 1,6-anhydro ring, generating MurNAc-6-P. Is required for the utilization of anhMurNAc either imported from the medium or derived from its own cell wall murein, and thus plays a role in cell wall recycling. The chain is Anhydro-N-acetylmuramic acid kinase from Escherichia coli O7:K1 (strain IAI39 / ExPEC).